The primary structure comprises 199 residues: Superoxide dismutase [Fe] (199 aa).

Residues H28, H80, D162, and H166 each coordinate Fe cation.

Belongs to the iron/manganese superoxide dismutase family. As to quaternary structure, homodimer. Fe cation serves as cofactor.

The protein resides in the cytoplasm. It catalyses the reaction 2 superoxide + 2 H(+) = H2O2 + O2. In terms of biological role, destroys superoxide anion radicals which are normally produced within the cells and which are toxic to biological systems. This chain is Superoxide dismutase [Fe] (sodB), found in Leptolyngbya boryana (Plectonema boryanum).